Here is a 166-residue protein sequence, read N- to C-terminus: Small ribosomal subunit protein uS9 (166 aa).

The disordered stretch occupies residues 135–166 (KKAGFLTRDPRATERKKYGLKKARKAPQYSKR). Over residues 142–151 (RDPRATERKK) the composition is skewed to basic and acidic residues. Residues 152 to 166 (YGLKKARKAPQYSKR) show a composition bias toward basic residues.

The protein belongs to the universal ribosomal protein uS9 family.

The protein is Small ribosomal subunit protein uS9 of Mycolicibacterium paratuberculosis (strain ATCC BAA-968 / K-10) (Mycobacterium paratuberculosis).